The primary structure comprises 421 residues: Tyrosine--tRNA ligase (421 aa).

Position 38 (tyrosine 38) interacts with L-tyrosine. A 'HIGH' region motif is present at residues 43–52 (PTGDSLHIGH). Residues tyrosine 169 and glutamine 173 each contribute to the L-tyrosine site. The 'KMSKS' region signature appears at 231–235 (KFGKS). Lysine 234 provides a ligand contact to ATP. The S4 RNA-binding domain maps to 353 to 419 (KNLVDFLVDT…GKKKYTLVHI (67 aa)).

Belongs to the class-I aminoacyl-tRNA synthetase family. TyrS type 1 subfamily. Homodimer.

The protein resides in the cytoplasm. It carries out the reaction tRNA(Tyr) + L-tyrosine + ATP = L-tyrosyl-tRNA(Tyr) + AMP + diphosphate + H(+). Functionally, catalyzes the attachment of tyrosine to tRNA(Tyr) in a two-step reaction: tyrosine is first activated by ATP to form Tyr-AMP and then transferred to the acceptor end of tRNA(Tyr). The polypeptide is Tyrosine--tRNA ligase (Lactobacillus delbrueckii subsp. bulgaricus (strain ATCC 11842 / DSM 20081 / BCRC 10696 / JCM 1002 / NBRC 13953 / NCIMB 11778 / NCTC 12712 / WDCM 00102 / Lb 14)).